A 68-amino-acid chain; its full sequence is Large ribosomal subunit protein bL33c (68 aa).

It belongs to the bacterial ribosomal protein bL33 family.

Its subcellular location is the plastid. It is found in the chloroplast. This Nymphaea alba (White water-lily) protein is Large ribosomal subunit protein bL33c.